The chain runs to 115 residues: NADH-ubiquinone oxidoreductase chain 3 (115 aa).

3 consecutive transmembrane segments (helical) span residues L3–W23, F55–L75, and L84–Y104.

Belongs to the complex I subunit 3 family. In terms of assembly, core subunit of respiratory chain NADH dehydrogenase (Complex I) which is composed of 45 different subunits. Interacts with TMEM186. Interacts with TMEM242.

The protein localises to the mitochondrion inner membrane. It carries out the reaction a ubiquinone + NADH + 5 H(+)(in) = a ubiquinol + NAD(+) + 4 H(+)(out). Its function is as follows. Core subunit of the mitochondrial membrane respiratory chain NADH dehydrogenase (Complex I) which catalyzes electron transfer from NADH through the respiratory chain, using ubiquinone as an electron acceptor. Essential for the catalytic activity of complex I. This is NADH-ubiquinone oxidoreductase chain 3 from Equus asinus (Donkey).